The following is a 225-amino-acid chain: Orotate phosphoribosyltransferase (225 aa).

Residues Arg-107, Lys-108, Lys-111, and 133–141 (EDLTTDGGS) each bind 5-phospho-alpha-D-ribose 1-diphosphate. Orotate is bound at residue Thr-137.

This sequence belongs to the purine/pyrimidine phosphoribosyltransferase family. PyrE subfamily. As to quaternary structure, homodimer. The cofactor is Mg(2+).

The enzyme catalyses orotidine 5'-phosphate + diphosphate = orotate + 5-phospho-alpha-D-ribose 1-diphosphate. Its pathway is pyrimidine metabolism; UMP biosynthesis via de novo pathway; UMP from orotate: step 1/2. Catalyzes the transfer of a ribosyl phosphate group from 5-phosphoribose 1-diphosphate to orotate, leading to the formation of orotidine monophosphate (OMP). The sequence is that of Orotate phosphoribosyltransferase from Roseobacter denitrificans (strain ATCC 33942 / OCh 114) (Erythrobacter sp. (strain OCh 114)).